A 64-amino-acid chain; its full sequence is Large ribosomal subunit protein bL35 (64 aa).

The span at 1 to 45 (MPKMKTHKGAAKRFKKTGKGKIKRRKAFKSHILTKKTPKRKRNLR) shows a compositional bias: basic residues. Positions 1–64 (MPKMKTHKGA…EEKRIKRLLP (64 aa)) are disordered.

The protein belongs to the bacterial ribosomal protein bL35 family.

This is Large ribosomal subunit protein bL35 from Natranaerobius thermophilus (strain ATCC BAA-1301 / DSM 18059 / JW/NM-WN-LF).